Reading from the N-terminus, the 48-residue chain is MNCLEILISKGYNMQGYSPDTLLLLSEKEGNDVEECEAYFSWLEAVYG.

This is an uncharacterized protein from Acidianus convivator (ATV).